The primary structure comprises 196 residues: Peptidyl-tRNA hydrolase (196 aa).

Position 17 (tyrosine 17) interacts with tRNA. The active-site Proton acceptor is histidine 22. Residues phenylalanine 68, asparagine 70, and asparagine 116 each contribute to the tRNA site.

Belongs to the PTH family. As to quaternary structure, monomer.

It is found in the cytoplasm. The enzyme catalyses an N-acyl-L-alpha-aminoacyl-tRNA + H2O = an N-acyl-L-amino acid + a tRNA + H(+). In terms of biological role, hydrolyzes ribosome-free peptidyl-tRNAs (with 1 or more amino acids incorporated), which drop off the ribosome during protein synthesis, or as a result of ribosome stalling. Functionally, catalyzes the release of premature peptidyl moieties from peptidyl-tRNA molecules trapped in stalled 50S ribosomal subunits, and thus maintains levels of free tRNAs and 50S ribosomes. In Yersinia pestis bv. Antiqua (strain Antiqua), this protein is Peptidyl-tRNA hydrolase.